Here is a 166-residue protein sequence, read N- to C-terminus: uncharacterized protein (166 aa).

Composition is skewed to basic and acidic residues over residues Met-1 to Ser-13, Lys-21 to Glu-112, and Asp-119 to Gly-137. Positions Met-1 to Thr-144 are disordered. 8 consecutive repeat copies span residues Asp-31 to Lys-41, Asp-42 to Lys-52, Asp-53 to Lys-63, Asp-64 to Lys-74, Asp-75 to Lys-85, Asp-86 to Lys-96, Asp-97 to Lys-107, and Asp-108 to Arg-118. An 8 X 11 AA approximate tandem repeats of D-K-T-K-E-T-A-G/E-S-A-K region spans residues Asp-31–Arg-118.

The protein belongs to the LEA type 1 family.

This is an uncharacterized protein from Encephalitozoon cuniculi (strain GB-M1) (Microsporidian parasite).